We begin with the raw amino-acid sequence, 396 residues long: S-adenosylmethionine synthase (396 aa).

His16 is an ATP binding site. Asp18 serves as a coordination point for Mg(2+). K(+) is bound at residue Glu44. Residues Glu57 and Gln100 each contribute to the L-methionine site. Residues 100-110 form a flexible loop region; the sequence is QSVDIAQGVDR. ATP-binding positions include 165 to 167, Asp240, 246 to 247, Ala263, and Lys267; these read DAK and RK. Asp240 lines the L-methionine pocket. Lys271 serves as a coordination point for L-methionine.

Belongs to the AdoMet synthase family. In terms of assembly, homotetramer; dimer of dimers. It depends on Mg(2+) as a cofactor. Requires K(+) as cofactor.

The protein localises to the cytoplasm. The enzyme catalyses L-methionine + ATP + H2O = S-adenosyl-L-methionine + phosphate + diphosphate. It functions in the pathway amino-acid biosynthesis; S-adenosyl-L-methionine biosynthesis; S-adenosyl-L-methionine from L-methionine: step 1/1. In terms of biological role, catalyzes the formation of S-adenosylmethionine (AdoMet) from methionine and ATP. The overall synthetic reaction is composed of two sequential steps, AdoMet formation and the subsequent tripolyphosphate hydrolysis which occurs prior to release of AdoMet from the enzyme. This Pseudomonas syringae pv. syringae (strain B728a) protein is S-adenosylmethionine synthase.